Reading from the N-terminus, the 1820-residue chain is Kinesin-like protein KIF20B (1820 aa).

Residues Tyr-58–Val-479 form the Kinesin motor domain. Gly-152–Thr-159 contacts ATP. Phosphoserine is present on Ser-488. 2 coiled-coil regions span residues Glu-523–Glu-603 and Gly-674–Thr-793. Position 560 is a phosphothreonine (Thr-560). Positions Ser-829 to Glu-866 are disordered. Ser-997 is subject to Phosphoserine. The segment at Glu-1050 to His-1107 is necessary and sufficient for interaction with SHTN1. Residues Glu-1247–Leu-1264 show a composition bias toward basic and acidic residues. The tract at residues Glu-1247–Lys-1275 is disordered. Residues Ser-1265 to Leu-1274 show a composition bias toward polar residues. The interaction with PIN1 stretch occupies residues Ile-1560–Lys-1820. Position 1588 is a phosphoserine (Ser-1588). Phosphothreonine; by CDK1 is present on Thr-1644. Ser-1658, Ser-1715, and Ser-1740 each carry phosphoserine. The segment covering Leu-1760–Gln-1772 has biased composition (polar residues). Positions Leu-1760–Tyr-1781 are disordered.

This sequence belongs to the TRAFAC class myosin-kinesin ATPase superfamily. Kinesin family. As to quaternary structure, oligomerizes (via kinesin motor domain). Associates with microtubules. Interacts (via C-terminal globular tail region) with PIN1 (via WW domain). Interacts with PRC1. Interacts with SHTN1 (via N-terminus); the interaction is direct and promotes the association of SHTN1 to microtubules in primary neurons. In terms of processing, phosphorylated during mitosis by CDK1. In terms of tissue distribution, brain, ovary, kidney and testis (at protein level). Overexpressed in bladder cancer cells (at protein level). Expressed in testis. Overexpressed in bladder cancer cells.

It localises to the nucleus. Its subcellular location is the cytoplasm. The protein localises to the cytoskeleton. It is found in the microtubule organizing center. The protein resides in the centrosome. It localises to the nucleolus. Its subcellular location is the nucleoplasm. The protein localises to the spindle. It is found in the spindle pole. The protein resides in the midbody. It localises to the cell projection. Its subcellular location is the axon. The protein localises to the growth cone. Functionally, plus-end-directed motor enzyme that is required for completion of cytokinesis. Required for proper midbody organization and abscission in polarized cortical stem cells. Plays a role in the regulation of neuronal polarization by mediating the transport of specific cargos. Participates in the mobilization of SHTN1 and in the accumulation of PIP3 in the growth cone of primary hippocampal neurons in a tubulin and actin-dependent manner. In the developing telencephalon, cooperates with SHTN1 to promote both the transition from the multipolar to the bipolar stage and the radial migration of cortical neurons from the ventricular zone toward the superficial layer of the neocortex. Involved in cerebral cortex growth. Acts as an oncogene for promoting bladder cancer cells proliferation, apoptosis inhibition and carcinogenic progression. The sequence is that of Kinesin-like protein KIF20B from Homo sapiens (Human).